Here is a 181-residue protein sequence, read N- to C-terminus: Large ribosomal subunit protein uL5 (181 aa).

This sequence belongs to the universal ribosomal protein uL5 family. In terms of assembly, part of the 50S ribosomal subunit; part of the 5S rRNA/L5/L18/L25 subcomplex. Contacts the 5S rRNA and the P site tRNA. Forms a bridge to the 30S subunit in the 70S ribosome.

Its function is as follows. This is one of the proteins that bind and probably mediate the attachment of the 5S RNA into the large ribosomal subunit, where it forms part of the central protuberance. In the 70S ribosome it contacts protein S13 of the 30S subunit (bridge B1b), connecting the 2 subunits; this bridge is implicated in subunit movement. Contacts the P site tRNA; the 5S rRNA and some of its associated proteins might help stabilize positioning of ribosome-bound tRNAs. The sequence is that of Large ribosomal subunit protein uL5 from Onion yellows phytoplasma (strain OY-M).